The primary structure comprises 571 residues: Proline--tRNA ligase (571 aa).

It belongs to the class-II aminoacyl-tRNA synthetase family. ProS type 1 subfamily. Homodimer.

The protein resides in the cytoplasm. It carries out the reaction tRNA(Pro) + L-proline + ATP = L-prolyl-tRNA(Pro) + AMP + diphosphate. In terms of biological role, catalyzes the attachment of proline to tRNA(Pro) in a two-step reaction: proline is first activated by ATP to form Pro-AMP and then transferred to the acceptor end of tRNA(Pro). As ProRS can inadvertently accommodate and process non-cognate amino acids such as alanine and cysteine, to avoid such errors it has two additional distinct editing activities against alanine. One activity is designated as 'pretransfer' editing and involves the tRNA(Pro)-independent hydrolysis of activated Ala-AMP. The other activity is designated 'posttransfer' editing and involves deacylation of mischarged Ala-tRNA(Pro). The misacylated Cys-tRNA(Pro) is not edited by ProRS. In Pseudomonas paraeruginosa (strain DSM 24068 / PA7) (Pseudomonas aeruginosa (strain PA7)), this protein is Proline--tRNA ligase.